A 370-amino-acid chain; its full sequence is Histidinol-phosphate aminotransferase (370 aa).

Residue Lys223 is modified to N6-(pyridoxal phosphate)lysine.

It belongs to the class-II pyridoxal-phosphate-dependent aminotransferase family. Histidinol-phosphate aminotransferase subfamily. As to quaternary structure, homodimer. Pyridoxal 5'-phosphate is required as a cofactor.

It carries out the reaction L-histidinol phosphate + 2-oxoglutarate = 3-(imidazol-4-yl)-2-oxopropyl phosphate + L-glutamate. Its pathway is amino-acid biosynthesis; L-histidine biosynthesis; L-histidine from 5-phospho-alpha-D-ribose 1-diphosphate: step 7/9. This Methylobacterium nodulans (strain LMG 21967 / CNCM I-2342 / ORS 2060) protein is Histidinol-phosphate aminotransferase.